The following is a 262-amino-acid chain: Protein CUSTOS (262 aa).

Disordered stretches follow at residues 1–79 (MAAP…LQTT) and 126–262 (FTSV…IPAN). The span at 9–18 (SDSESSNSSS) shows a compositional bias: low complexity. A compositionally biased stretch (polar residues) spans 51–61 (ANSQLSTSQPS). At Ser61 the chain carries Phosphoserine. Thr79 carries the phosphothreonine modification. Residue Ser138 is modified to Phosphoserine. Thr182 is subject to Phosphothreonine. Basic residues predominate over residues 188 to 199 (KKKRKLKKKAKK). Low complexity predominate over residues 200–209 (VASVDSAVAA). The span at 210–221 (TTPTSMATVQKQ) shows a compositional bias: polar residues. Thr211 bears the Phosphothreonine mark. The Nucleolar localization signal (NLS) signature appears at 236–241 (KKKKKA).

This sequence belongs to the CUSTOS family.

The protein resides in the nucleus envelope. Its function is as follows. Plays a role in the regulation of Wnt signaling pathway during early development. In Homo sapiens (Human), this protein is Protein CUSTOS.